A 441-amino-acid chain; its full sequence is Proline--tRNA ligase (441 aa).

It belongs to the class-II aminoacyl-tRNA synthetase family. ProS type 2 subfamily. Homodimer.

The protein resides in the cytoplasm. The enzyme catalyses tRNA(Pro) + L-proline + ATP = L-prolyl-tRNA(Pro) + AMP + diphosphate. In terms of biological role, catalyzes the attachment of proline to tRNA(Pro) in a two-step reaction: proline is first activated by ATP to form Pro-AMP and then transferred to the acceptor end of tRNA(Pro). In Methylorubrum populi (strain ATCC BAA-705 / NCIMB 13946 / BJ001) (Methylobacterium populi), this protein is Proline--tRNA ligase.